The following is a 215-amino-acid chain: Chaperone protein TorD (215 aa).

It belongs to the TorD/DmsD family. TorD subfamily.

It localises to the cytoplasm. Involved in the biogenesis of TorA. Acts on TorA before the insertion of the molybdenum cofactor and, as a result, probably favors a conformation of the apoenzyme that is competent for acquiring the cofactor. The polypeptide is Chaperone protein TorD (Aliivibrio salmonicida (strain LFI1238) (Vibrio salmonicida (strain LFI1238))).